The sequence spans 411 residues: 2,3-bisphosphoglycerate-independent phosphoglycerate mutase (411 aa).

This sequence belongs to the BPG-independent phosphoglycerate mutase family. A-PGAM subfamily.

The catalysed reaction is (2R)-2-phosphoglycerate = (2R)-3-phosphoglycerate. The protein operates within carbohydrate degradation; glycolysis; pyruvate from D-glyceraldehyde 3-phosphate: step 3/5. Functionally, catalyzes the interconversion of 2-phosphoglycerate and 3-phosphoglycerate. The sequence is that of 2,3-bisphosphoglycerate-independent phosphoglycerate mutase from Thermococcus gammatolerans (strain DSM 15229 / JCM 11827 / EJ3).